We begin with the raw amino-acid sequence, 529 residues long: Delayed-rectifier potassium channel regulatory subunit KCNS1 (529 aa).

The Cytoplasmic portion of the chain corresponds to 1-217; that stretch reads MLMLLVRGTR…LTMENPGYSL (217 aa). The chain crosses the membrane as a helical span at residues 218–239; that stretch reads PSKLFSCVSISVVLASIAAMCI. The Extracellular segment spans residues 240 to 270; it reads HSLPEYQAREAAAAVAAVAAGRSPEGVRDDP. The chain crosses the membrane as a helical span at residues 271–293; the sequence is VLRRLEYFCIAWFSFEVSSRLLL. At 294 to 304 the chain is on the cytoplasmic side; the sequence is APSTRNFFCHP. Residues 305-322 traverse the membrane as a helical segment; the sequence is LNLIDIVSVLPFYLTLLA. Residues 323–340 are Extracellular-facing; it reads GVALGDQGGTGGKELGHL. A helical; Voltage-sensor membrane pass occupies residues 341-361; the sequence is GKVVQVFRLMRIFRVLKLARH. Topologically, residues 362–376 are cytoplasmic; it reads STGLRSLGATLKHSY. Residues 377–398 traverse the membrane as a helical segment; it reads REVGILLLYLAVGVSVFSGVAY. The Extracellular segment spans residues 399 to 411; it reads TAEKEEDVGFNTI. The segment at residues 412–423 is an intramembrane region (helical); it reads PACWWWGTVSMT. The Selectivity filter signature appears at 424–429; it reads TVGYGD. The stretch at 424–431 is an intramembrane region; that stretch reads TVGYGDVV. The Extracellular portion of the chain corresponds to 432–438; sequence PVTVAGK. A helical membrane pass occupies residues 439–467; it reads LAASGCILGGILVVALPITIIFNKFSHFY. Residues 468-529 lie on the Cytoplasmic side of the membrane; the sequence is RRQKALEAAV…PSEPPHPQMY (62 aa). A disordered region spans residues 500-529; it reads LETSREISQEGRSADLETQAPSEPPHPQMY. The segment covering 502-514 has biased composition (basic and acidic residues); it reads TSREISQEGRSAD.

The protein belongs to the potassium channel family. S (TC 1.A.1.2) subfamily. Kv9.1/KCNS1 sub-subfamily. As to quaternary structure, heterotetramer with KCNB1. Heterotetramer with KCNB2. Does not form homomultimers.

The protein localises to the cell membrane. Its function is as follows. Potassium channel regulatory subunit that modulate the delayed rectifier voltage-gated potassium channel activity of KCNB1 and KCNB2 by altering their kinetics, expression levels, and shifting the half-inactivation potential to more polarized values. While it does not form functional channels on its own, it can form functional heterotetrameric channels with KCNB1 and KCNB2. Each regulatory subunit has unique regulatory properties that can lead to extensive inhibition, significant changes in kinetics, and/or substantial shifts in the voltage dependencies of the inactivation process. The polypeptide is Delayed-rectifier potassium channel regulatory subunit KCNS1 (Colobus guereza (Mantled guereza)).